A 1152-amino-acid chain; its full sequence is Syntaxin-binding protein 5 (1152 aa).

The interval 14–35 (TAGSSSASQQQQQQQHPPGNRE) is disordered. The segment covering 17–28 (SSSASQQQQQQQ) has biased composition (low complexity). 10 WD repeats span residues 62–95 (SALAFDPVQKILAVGTQTGALRLFGRPGVECYCQ), 102–141 (VIQLQFLINEGALVSALADDTLHLWNLRQKRPAVLHSLKF), 146–182 (VTFCHLPFQSKWLYVGTERGNIHIVNVESFTLSGYVI), 201–235 (HISDNPMDEGKLLIGFESGTVVLWDLKSKKADYRY), 241–273 (IHSVAWHHEGKQFICSHSDGTLTIWNVRSPAKP), 295–337 (PILK…KSTA), 345–379 (IVDFLTLCETPYPNDFQEPYAVVVLLEKDLVLIDL), 401–478 (TCCE…YKLK), 506–620 (QIIS…ELVI), and 634–696 (TSLA…SGAG). Disordered stretches follow at residues 555-596 (VDTP…GLRD) and 675-731 (SNDP…QKVN). S693 is subject to Phosphoserine. Over residues 713-722 (SPTSGSSSPH) the composition is skewed to low complexity. 2 positions are modified to phosphoserine: S724 and S760. T763 bears the Phosphothreonine mark. The residue at position 783 (S783) is a Phosphoserine. The residue at position 785 (T785) is a Phosphothreonine. S786 bears the Phosphoserine mark. WD repeat units follow at residues 795 to 852 (ISAL…SGTI), 861 to 935 (RMAF…QSCA), 940 to 984 (ITET…LDVY), and 998 to 1021 (CFANNGQALYLVSPTEIQRLTYSQ). The span at 883–893 (NVAEEKDEKEK) shows a compositional bias: basic and acidic residues. The interval 883–907 (NVAEEKDEKEKLKKRRPVSVSPSSS) is disordered. Phosphoserine is present on residues S901 and S903. T1040 bears the Phosphothreonine mark. Residues S1059 and S1132 each carry the phosphoserine modification. In terms of domain architecture, v-SNARE coiled-coil homology spans 1087–1147 (GIEGVKGAAS…HEMMLKYKDK (61 aa)).

It belongs to the WD repeat L(2)GL family. In terms of assembly, part of a complex that contains STX1, STXBP5, SNAP25 and SYT1. Interacts with STX1A and STX4A via its v-SNARE homology domain. Part of a complex that contains STXBP5, STX4A and SNAP23. As to expression, detected in heart, spleen, lung, skeletal muscle, liver and kidney (at protein level). Detected in brain, particularly in the olfactory bulb and in hippocampus. Detected in the tenia tecta and in the piriform layer of the brain cortex.

It is found in the cytoplasm. The protein localises to the cell membrane. It localises to the membrane. Functionally, plays a regulatory role in calcium-dependent exocytosis and neurotransmitter release. Inhibits membrane fusion between transport vesicles and the plasma membrane. May modulate the assembly of trans-SNARE complexes between transport vesicles and the plasma membrane. Competes with STXBP1 for STX1 binding. Inhibits translocation of GLUT4 from intracellular vesicles to the plasma membrane. This chain is Syntaxin-binding protein 5 (Stxbp5), found in Mus musculus (Mouse).